Reading from the N-terminus, the 458-residue chain is DNA repair protein RadA (458 aa).

The C4-type zinc finger occupies 11-28 (CNDCGAEFSRWQGQCSAC). ATP is bound at residue 100 to 107 (GHPGAGKS). The RadA KNRFG motif motif lies at 256–260 (KNRFG). Residues 355–458 (DVFVNVVGGV…TDALAVLDNL (104 aa)) are lon-protease-like.

The protein belongs to the RecA family. RadA subfamily.

Its function is as follows. DNA-dependent ATPase involved in processing of recombination intermediates, plays a role in repairing DNA breaks. Stimulates the branch migration of RecA-mediated strand transfer reactions, allowing the 3' invading strand to extend heteroduplex DNA faster. Binds ssDNA in the presence of ADP but not other nucleotides, has ATPase activity that is stimulated by ssDNA and various branched DNA structures, but inhibited by SSB. Does not have RecA's homology-searching function. This is DNA repair protein RadA from Haemophilus influenzae (strain ATCC 51907 / DSM 11121 / KW20 / Rd).